The primary structure comprises 297 residues: HTH-type transcriptional regulator ArgP (297 aa).

The HTH lysR-type domain occupies 4–60; the sequence is PDYRTLQALDAVIRERGFERAAQKLCITQSAVSQRIKQLENMFGQPLLVRTVPPRPT. A DNA-binding region (H-T-H motif) is located at residues 21-40; sequence FERAAQKLCITQSAVSQRIK.

Belongs to the LysR transcriptional regulatory family. As to quaternary structure, homodimer.

Functionally, controls the transcription of genes involved in arginine and lysine metabolism. This chain is HTH-type transcriptional regulator ArgP, found in Salmonella typhi.